A 754-amino-acid chain; its full sequence is Elongation factor G-2, mitochondrial (754 aa).

Positions 63 to 340 (DKLRNIGISA…GVVSFLPSPN (278 aa)) constitute a tr-type G domain. GTP is bound by residues 72–79 (AHIDSGKT), 139–143 (DTPGH), and 193–196 (NKLD).

This sequence belongs to the TRAFAC class translation factor GTPase superfamily. Classic translation factor GTPase family. EF-G/EF-2 subfamily. As to expression, expressed in cotyledons and adult leaves at the same levels.

It is found in the mitochondrion. Its pathway is protein biosynthesis; polypeptide chain elongation. Its function is as follows. Mitochondrial GTPase that catalyzes the GTP-dependent ribosomal translocation step during translation elongation. During this step, the ribosome changes from the pre-translocational (PRE) to the post-translocational (POST) state as the newly formed A-site-bound peptidyl-tRNA and P-site-bound deacylated tRNA move to the P and E sites, respectively. Catalyzes the coordinated movement of the two tRNA molecules, the mRNA and conformational changes in the ribosome. The polypeptide is Elongation factor G-2, mitochondrial (MEFG2) (Arabidopsis thaliana (Mouse-ear cress)).